The chain runs to 239 residues: Phosphoribosylaminoimidazole-succinocarboxamide synthase (239 aa).

The protein belongs to the SAICAR synthetase family.

It carries out the reaction 5-amino-1-(5-phospho-D-ribosyl)imidazole-4-carboxylate + L-aspartate + ATP = (2S)-2-[5-amino-1-(5-phospho-beta-D-ribosyl)imidazole-4-carboxamido]succinate + ADP + phosphate + 2 H(+). Its pathway is purine metabolism; IMP biosynthesis via de novo pathway; 5-amino-1-(5-phospho-D-ribosyl)imidazole-4-carboxamide from 5-amino-1-(5-phospho-D-ribosyl)imidazole-4-carboxylate: step 1/2. In Bacillus cereus (strain B4264), this protein is Phosphoribosylaminoimidazole-succinocarboxamide synthase.